The chain runs to 280 residues: Shikimate kinase (280 aa).

74-84 is a binding site for ATP; the sequence is PGGSGLGSSSA.

The protein belongs to the GHMP kinase family. Archaeal shikimate kinase subfamily.

The protein resides in the cytoplasm. The catalysed reaction is shikimate + ATP = 3-phosphoshikimate + ADP + H(+). Its pathway is metabolic intermediate biosynthesis; chorismate biosynthesis; chorismate from D-erythrose 4-phosphate and phosphoenolpyruvate: step 5/7. This chain is Shikimate kinase (aroK), found in Archaeoglobus fulgidus (strain ATCC 49558 / DSM 4304 / JCM 9628 / NBRC 100126 / VC-16).